Here is a 1190-residue protein sequence, read N- to C-terminus: Ras-specific guanine nucleotide-releasing factor 2 (1190 aa).

The 112-residue stretch at 22-133 (EGTKRGFLSK…WMEAIHQASY (112 aa)) folds into the PH 1 domain. Residues 155 to 193 (ETEKIAANQLRHQLEDQDTEIERLKSEIVALNKTKERMR) adopt a coiled-coil conformation. The region spanning 205-234 (DIKKIKKVQSFMRGWLCRRKWKTIVQDYIC) is the IQ domain. In terms of domain architecture, DH spans 243–429 (KRNQIVFTMV…EELSRVMHDE (187 aa)). Positions 470–588 (PSVERGKLSK…WMSDISQCVD (119 aa)) constitute a PH 2 domain. In terms of domain architecture, N-terminal Ras-GEF spans 635–755 (KVPQIRYASV…LTSSLNSRIG (121 aa)). A disordered region spans residues 713–744 (VDGKSPRLCRKFSSPPPLAVSRTSSPVRARKL). Residues Ser725 and Ser726 each carry the phosphoserine modification. The residue at position 736 (Ser736) is a Phosphoserine; by CDK5. The tract at residues 743 to 751 (KLSLTSSLN) is regulates proteasomal degradation. A phosphoserine mark is found at Ser745 and Ser749. The segment at 757 to 826 (LDLTTSSSSS…QPGGQVADST (70 aa)) is disordered. The span at 760–776 (TTSSSSSSPTTTVHSPA) shows a compositional bias: low complexity. Positions 798–810 (TDMSPCRSPSTTP) are enriched in polar residues. 3 positions are modified to phosphoserine: Ser801, Ser805, and Ser925. Positions 955–1187 (SAMELAEQIT…YELSLKIEPR (233 aa)) constitute a Ras-GEF domain. Residues 1052-1081 (ALNRSAIYRLKKTWTKVSKQTKALMDKLQK) are responsible of the affinity for farnesylated versus geranylgeranylated Ras.

As to quaternary structure, homooligomer and heterooligomer with RASGRF1. Interacts with Ras and RAC1. Interacts in a calcium-dependent manner with calmodulin. Interacts with CDK5R1 and probably EPB49. Interacts with the AMPA receptor through GRIA1. Interacts with microtubules. In terms of processing, phosphorylated by CDK5; down-regulates RASGRF2-mediated RAC1 activation. Post-translationally, ubiquitinated upon interaction with Ras. Ubiquitination leads to degradation through the 26S proteasome. In terms of tissue distribution, widely expressed. Detected in brain, lung, spleen, pancreas, kidney, liver, heart, mammary gland and skeletal muscle.

The protein resides in the cytoplasm. It localises to the cell membrane. The protein localises to the endoplasmic reticulum membrane. Functions as a calcium-regulated nucleotide exchange factor activating both Ras and RAC1 through the exchange of bound GDP for GTP. Preferentially activates HRAS in vivo compared to RRAS based on their different types of prenylation. Functions in synaptic plasticity by contributing to the induction of long term potentiation. The polypeptide is Ras-specific guanine nucleotide-releasing factor 2 (Rasgrf2) (Rattus norvegicus (Rat)).